A 383-amino-acid chain; its full sequence is MNELEFVTLHRRHLHQYPELSLHEFETTSYITSFLEDLGVPYDRPLKTGVIAYLEGNSHHTIAFRADIDALPIYEENDIDFKSKNDHVMHACGHDGHTTALMLFVKRCKALYDKSELPHNVVFIFQPAEETGGGANRLIKAGAFDKYPIEAVFGFHVNPFEKEGKIVIRDEEITASATEYRFFLKGLSSHVADKEQGHSCGEGLQHVLSQIGQIQQFHLNGLKRNIIHMGHFEAGEAINTVPSHGYLEGTIRTYDTEDLAIVKHQMHKIAESVQLLFNVECEVKFEEGYPPTMNHPQLRQAVENAIEGANLEVVEKKLPFLFGEDFSFYGQQLAPSYFVFVGTQNKEKGFVTGLHTAHLNFDEKILIDVVNYYEHLLRNYKEV.

Belongs to the peptidase M20 family.

This is an uncharacterized protein from Staphylococcus epidermidis (strain ATCC 35984 / DSM 28319 / BCRC 17069 / CCUG 31568 / BM 3577 / RP62A).